A 434-amino-acid chain; its full sequence is Purple acid phosphatase 22 (434 aa).

Residues 1–22 (MKLFGLFLSFTLLFLCPFISQA) form the signal peptide. Asn116 carries N-linked (GlcNAc...) asparagine glycosylation. Residues Asp148, Asp175, and Tyr178 each contribute to the Fe cation site. Residue Asp175 coordinates Zn(2+). Zn(2+)-binding residues include Asn208 and His292. A substrate-binding site is contributed by Asn208. His302 (proton donor) is an active-site residue. His329 is a binding site for Zn(2+). 329–331 (HVH) provides a ligand contact to substrate. His331 is a binding site for Fe cation. Asn403 is a glycosylation site (N-linked (GlcNAc...) asparagine).

This sequence belongs to the metallophosphoesterase superfamily. Purple acid phosphatase family. Homodimer. Requires Fe cation as cofactor. The cofactor is Zn(2+). As to expression, expressed in roots, stems, leaves, flowers and siliques.

Its subcellular location is the secreted. It catalyses the reaction a phosphate monoester + H2O = an alcohol + phosphate. The chain is Purple acid phosphatase 22 (PAP22) from Arabidopsis thaliana (Mouse-ear cress).